Here is a 59-residue protein sequence, read N- to C-terminus: MDTFTALTADEERFERHLAEQVWANSKVARAKFRRVAVAIYLLGAAMLSSGAAVLAYRL.

Residues 36–56 traverse the membrane as a helical segment; sequence VAVAIYLLGAAMLSSGAAVLA.

The protein resides in the cell membrane. In terms of biological role, pycsar (pyrimidine cyclase system for antiphage resistance) provides immunity against bacteriophage. The pyrimidine cyclase (PycC) synthesizes cyclic nucleotides in response to infection; these serve as specific second messenger signals. The signals activate the adjacent effector, leading to bacterial cell death and abortive phage infection. A clade D Pycsar system. Its function is as follows. The effector gene of a two-gene Pycsar system. Expression of this and adjacent uridylate cyclase MePycC (AC A0A1C5G2V9) probably confers resistance to bacteriophage. The genes are probably only expressed in response to bacteriophage infection. Probably only responds to cUMP (produced by its cognate NTP cyclase), acts by impairing membrane integrity. This is Pycsar effector protein MePycTM from Micromonospora echinofusca.